Here is a 185-residue protein sequence, read N- to C-terminus: Ribosome-recycling factor (185 aa).

Belongs to the RRF family.

The protein resides in the cytoplasm. In terms of biological role, responsible for the release of ribosomes from messenger RNA at the termination of protein biosynthesis. May increase the efficiency of translation by recycling ribosomes from one round of translation to another. The protein is Ribosome-recycling factor of Brevibacillus brevis (strain 47 / JCM 6285 / NBRC 100599).